A 578-amino-acid polypeptide reads, in one-letter code: Arginine--tRNA ligase (578 aa).

The short motif at 127–137 (PNLAKEMHVGH) is the 'HIGH' region element.

Belongs to the class-I aminoacyl-tRNA synthetase family. Monomer.

It is found in the cytoplasm. It carries out the reaction tRNA(Arg) + L-arginine + ATP = L-arginyl-tRNA(Arg) + AMP + diphosphate. This is Arginine--tRNA ligase from Pseudomonas entomophila (strain L48).